Reading from the N-terminus, the 801-residue chain is Interleukin-4 receptor subunit alpha (801 aa).

The N-terminal stretch at 1–25 (MGWLCTKFLSSVSCLILLWVTGSGG) is a signal peptide. The Extracellular portion of the chain corresponds to 26–232 (IKVLGDPTCF…NHFQLPLLQR (207 aa)). A disulfide bridge links C34 with C44. N71 carries an N-linked (GlcNAc...) asparagine glycan. An intrachain disulfide couples C74 to C86. The 99-residue stretch at 125-223 (APDNLTLHTN…EWSPSITWYN (99 aa)) folds into the Fibronectin type-III domain. 3 N-linked (GlcNAc...) asparagine glycosylation sites follow: N128, N134, and N162. A Phosphoserine modification is found at S164. N-linked (GlcNAc...) asparagine glycosylation is present at N176. The WSXWS motif motif lies at 212–216 (WSEWS). A helical membrane pass occupies residues 233 to 256 (LPLGVSISCICILLFCLTCYFSII). Topologically, residues 257-801 (KIKKIWWDQI…PVGTLGVTVS (545 aa)) are cytoplasmic. The Box 1 motif signature appears at 262-270 (WWDQIPTPA). The tract at residues 424-476 (VGQSSMAESSSLLPSESGQASTSWACFPTGPSETTCQVTGQQPPHPDPERATG) is disordered. Residues 426–444 (QSSMAESSSLLPSESGQAS) are compositionally biased toward low complexity. The segment at 439–549 (ESGQASTSWA…ESWEQILHMS (111 aa)) is required for IRS1 activation and IL4-induced cell growth. Residues 454–465 (PSETTCQVTGQQ) are compositionally biased toward polar residues. Phosphotyrosine is present on Y492. The interval 493 to 515 (RSFSDFSSPAPNPGELASEQKQA) is disordered. Residues 549–644 (SVLQHGTAGS…NSMPLFTFGL (96 aa)) form a required for IL4-induced gene expression region. 3 positions are modified to phosphotyrosine: Y566, Y594, and Y622. The ITIM motif signature appears at 698 to 703 (IVYSSL). The interval 767-801 (RTPSNLSGVGKGPGHSPVPSQTTEVPVGTLGVTVS) is disordered.

The protein belongs to the type I cytokine receptor family. Type 4 subfamily. In terms of assembly, the functional IL4 receptor is formed by initial binding of IL4 to IL4R. Subsequent recruitment to the complex of the common gamma chain, in immune cells, creates a type I receptor and, in non-immune cells, of IL13RA1 forms a type II receptor. IL4R can also interact with the IL13/IL13RA1 complex to form a similar type II receptor. Interacts with PIK3C3. Interacts with the SH2-containing phosphatases, PTPN6/SHIP1, PTPN11/SHIP2 and INPP5D/SHIP. Interacts with JAK1 through a Box 1-containing region; inhibited by SOCS5. Interacts with SOCS5; inhibits IL4 signaling. Interacts with JAK3. Interacts with CLM1. Interacts with IL13RA2. In terms of processing, on IL4 binding, phosphorylated on C-terminal tyrosine residues. As to expression, isoform 2 is expressed in kidney, spleen, lung and liver.

Its subcellular location is the cell membrane. The protein localises to the secreted. Receptor for both interleukin 4 and interleukin 13. Couples to the JAK1/2/3-STAT6 pathway. The IL4 response is involved in promoting Th2 differentiation. The IL4/IL13 responses are involved in regulating IgE production and, chemokine and mucus production at sites of allergic inflammation. In certain cell types, can signal through activation of insulin receptor substrates, IRS1/IRS2. Its function is as follows. Isoform 2 (soluble form) inhibits IL4-induced spleen cell proliferation. This chain is Interleukin-4 receptor subunit alpha (Il4r), found in Rattus norvegicus (Rat).